We begin with the raw amino-acid sequence, 150 residues long: MSNRVGLASSLKDGQKYMDLWPVRKELNSIFPEQRIIKATRFGVKVMPAIAAISVLTQMVFNNYQAMPQAVVMALFAISLPLQGMWWLGNRSNTKLPPALVSWYRELHEKITETGFALEPMKSRPRYKELAIILNRAFRQLDKSSMERWF.

The next 2 helical transmembrane spans lie at 42–62 and 70–90; these read FGVK…MVFN and AVVM…WLGN.

The protein belongs to the UPF0208 family.

It is found in the cell inner membrane. The protein is UPF0208 membrane protein VS_0999 of Vibrio atlanticus (strain LGP32) (Vibrio splendidus (strain Mel32)).